The primary structure comprises 491 residues: Protein nucleotidyltransferase YdiU (491 aa).

ATP is bound by residues Gly-94, Gly-96, Arg-97, Lys-117, Asp-129, Gly-130, Arg-180, and Arg-187. The Proton acceptor role is filled by Asp-256. Positions 257 and 266 each coordinate Mg(2+). Position 266 (Asp-266) interacts with ATP.

This sequence belongs to the SELO family. Mg(2+) serves as cofactor. Mn(2+) is required as a cofactor.

It carries out the reaction L-seryl-[protein] + ATP = 3-O-(5'-adenylyl)-L-seryl-[protein] + diphosphate. The enzyme catalyses L-threonyl-[protein] + ATP = 3-O-(5'-adenylyl)-L-threonyl-[protein] + diphosphate. The catalysed reaction is L-tyrosyl-[protein] + ATP = O-(5'-adenylyl)-L-tyrosyl-[protein] + diphosphate. It catalyses the reaction L-histidyl-[protein] + UTP = N(tele)-(5'-uridylyl)-L-histidyl-[protein] + diphosphate. It carries out the reaction L-seryl-[protein] + UTP = O-(5'-uridylyl)-L-seryl-[protein] + diphosphate. The enzyme catalyses L-tyrosyl-[protein] + UTP = O-(5'-uridylyl)-L-tyrosyl-[protein] + diphosphate. Its function is as follows. Nucleotidyltransferase involved in the post-translational modification of proteins. It can catalyze the addition of adenosine monophosphate (AMP) or uridine monophosphate (UMP) to a protein, resulting in modifications known as AMPylation and UMPylation. The polypeptide is Protein nucleotidyltransferase YdiU (Alkaliphilus metalliredigens (strain QYMF)).